The chain runs to 596 residues: Neuroepithelial cell-transforming gene 1 protein (596 aa).

Residue M1 is modified to N-acetylmethionine. The segment at 1-44 (MEPELAAQKQPRPRRRSRRASGLSTEGATGPSADTSGSELDGRC) is disordered. The tract at residues 1-74 (MEPELAAQKQ…LKRKRREKDD (74 aa)) is necessary for nuclear localization. A Nuclear localization signal motif is present at residues 12-19 (RPRRRSRR). 2 positions are modified to phosphoserine: S21 and S32. Over residues 22-38 (GLSTEGATGPSADTSGS) the composition is skewed to polar residues. Positions 66–72 (KRKRREK) match the Nuclear localization signal motif. Phosphoserine is present on residues S100, S106, and S122. The segment at 127–146 (GDHRSPASAQKFSSRSTVPT) is disordered. Residues 133-145 (ASAQKFSSRSTVP) show a composition bias toward polar residues. Positions 174–356 (RRQEAIYEMS…QGVLSDINLK (183 aa)) constitute a DH domain. Residues 386 to 501 (VLLCHGELRS…WFNCIRAAIA (116 aa)) form the PH domain. Position 508 is a phosphoserine (S508). The segment at 562 to 596 (MAEDSKSLKTHQTQPGIRRARDKALSGGKRKETLV) is disordered.

As to quaternary structure, interacts with RHOA in its GTP- and GDP-bound states, and with CDC42 in its GTP-bound state. Interacts with the PDZ 1 domain of BAIAP1. As to expression, widely expressed.

The protein resides in the cytoplasm. It localises to the nucleus. Acts as a guanine nucleotide exchange factor (GEF) for RhoA GTPase. May be involved in activation of the SAPK/JNK pathway Stimulates genotoxic stress-induced RHOB activity in breast cancer cells leading to their cell death. The chain is Neuroepithelial cell-transforming gene 1 protein (NET1) from Homo sapiens (Human).